A 403-amino-acid polypeptide reads, in one-letter code: Probable tRNA sulfurtransferase (403 aa).

In terms of domain architecture, THUMP spans 60–165; that stretch reads QLAEERLKPI…KEGVFLSCRT (106 aa). ATP-binding positions include 183–184, 208–209, R265, G287, and Q296; these read ML and HF.

This sequence belongs to the ThiI family.

Its subcellular location is the cytoplasm. The catalysed reaction is [ThiI sulfur-carrier protein]-S-sulfanyl-L-cysteine + a uridine in tRNA + 2 reduced [2Fe-2S]-[ferredoxin] + ATP + H(+) = [ThiI sulfur-carrier protein]-L-cysteine + a 4-thiouridine in tRNA + 2 oxidized [2Fe-2S]-[ferredoxin] + AMP + diphosphate. It catalyses the reaction [ThiS sulfur-carrier protein]-C-terminal Gly-Gly-AMP + S-sulfanyl-L-cysteinyl-[cysteine desulfurase] + AH2 = [ThiS sulfur-carrier protein]-C-terminal-Gly-aminoethanethioate + L-cysteinyl-[cysteine desulfurase] + A + AMP + 2 H(+). It functions in the pathway cofactor biosynthesis; thiamine diphosphate biosynthesis. Its function is as follows. Catalyzes the ATP-dependent transfer of a sulfur to tRNA to produce 4-thiouridine in position 8 of tRNAs, which functions as a near-UV photosensor. Also catalyzes the transfer of sulfur to the sulfur carrier protein ThiS, forming ThiS-thiocarboxylate. This is a step in the synthesis of thiazole, in the thiamine biosynthesis pathway. The sulfur is donated as persulfide by IscS. In Listeria monocytogenes serotype 4a (strain HCC23), this protein is Probable tRNA sulfurtransferase.